A 183-amino-acid chain; its full sequence is Bifunctional protein PyrR (183 aa).

Positions 100–112 (VILVDDVLYTGRT) match the PRPP-binding motif.

It belongs to the purine/pyrimidine phosphoribosyltransferase family. PyrR subfamily.

It carries out the reaction UMP + diphosphate = 5-phospho-alpha-D-ribose 1-diphosphate + uracil. Functionally, regulates the transcription of the pyrimidine nucleotide (pyr) operon in response to exogenous pyrimidines. In terms of biological role, also displays a weak uracil phosphoribosyltransferase activity which is not physiologically significant. The protein is Bifunctional protein PyrR of Deinococcus deserti (strain DSM 17065 / CIP 109153 / LMG 22923 / VCD115).